The sequence spans 263 residues: Hydroxyethylthiazole kinase (263 aa).

Methionine 39 lines the substrate pocket. ATP is bound by residues lysine 115 and threonine 160. Glycine 187 contacts substrate.

Belongs to the Thz kinase family. It depends on Mg(2+) as a cofactor.

The catalysed reaction is 5-(2-hydroxyethyl)-4-methylthiazole + ATP = 4-methyl-5-(2-phosphooxyethyl)-thiazole + ADP + H(+). It participates in cofactor biosynthesis; thiamine diphosphate biosynthesis; 4-methyl-5-(2-phosphoethyl)-thiazole from 5-(2-hydroxyethyl)-4-methylthiazole: step 1/1. Functionally, catalyzes the phosphorylation of the hydroxyl group of 4-methyl-5-beta-hydroxyethylthiazole (THZ). The protein is Hydroxyethylthiazole kinase of Staphylococcus saprophyticus subsp. saprophyticus (strain ATCC 15305 / DSM 20229 / NCIMB 8711 / NCTC 7292 / S-41).